Consider the following 236-residue polypeptide: Small ribosomal subunit protein uS2c (236 aa).

This sequence belongs to the universal ribosomal protein uS2 family.

The protein localises to the plastid. It localises to the chloroplast. The sequence is that of Small ribosomal subunit protein uS2c (rps2) from Triticum aestivum (Wheat).